The chain runs to 117 residues: Minor capsid protein VP2 (117 aa).

This sequence belongs to the lagovirus VP2 protein family. Homooligomer. The portal-like structure consists in 12 copies of VP2. Interacts with capsid protein VP1.

Its subcellular location is the virion. The protein resides in the host cytoplasm. Its function is as follows. Minor structural protein that forms a portal-like structure at a unique three-fold axis of symmetry, following binding to the host receptor. The channel formed by VP2 may allow the delivery of the viral genome through the host endosomal membrane. This is Minor capsid protein VP2 from Rabbit hemorrhagic disease virus (strain AST89) (Ra/LV/RHDV/AST89/1989/SP).